Here is a 195-residue protein sequence, read N- to C-terminus: MRTGIFGGSFDPPHNGHLAMCLFARELLRLDRLIVSVSRNPFKTGAHASDDDRVSMARLLTDEVNAAGRFAESSSWELETDGPSYTVDLLRHIADLYPDDELLLLVGEDSYRQMGQWKAASEIPRLCQIVYFGREGYENCQHDAEALHLPVRRIDFDMPVSATEIRRLVAAGQPVSQLVPPSINHYIAEHGLYRS.

It belongs to the NadD family.

The catalysed reaction is nicotinate beta-D-ribonucleotide + ATP + H(+) = deamido-NAD(+) + diphosphate. It participates in cofactor biosynthesis; NAD(+) biosynthesis; deamido-NAD(+) from nicotinate D-ribonucleotide: step 1/1. Catalyzes the reversible adenylation of nicotinate mononucleotide (NaMN) to nicotinic acid adenine dinucleotide (NaAD). The protein is Probable nicotinate-nucleotide adenylyltransferase of Chlorobaculum parvum (strain DSM 263 / NCIMB 8327) (Chlorobium vibrioforme subsp. thiosulfatophilum).